Consider the following 95-residue polypeptide: Mitochondrial import inner membrane translocase subunit Tim13 (95 aa).

An N-acetylmethionine modification is found at M1. S7 is modified (phosphoserine). A Twin CX3C motif motif is present at residues 46–69 (CFRKCIGKPGGSLDNSEQKCIAMC). 2 cysteine pairs are disulfide-bonded: C46–C69 and C50–C65. Residue K53 is modified to N6-succinyllysine.

The protein belongs to the small Tim family. In terms of assembly, heterohexamer; composed of 3 copies of TIMM8 (TIMM8A or TIMM8B) and 3 copies of TIMM13, named soluble 70 kDa complex. Associates with the TIM22 complex, whose core is composed of TIMM22. In terms of tissue distribution, present at high level in liver and brain, and at lower level in muscle and heart. In CNS sections, it is predominantly present in the soma and the dendritic portion of the Purkinje cells of the cerebellum, but not in the glial cells. Scattered expression also is also detected in the brain stem, olfactory bulb, substantia nigra, hippocampus and striatum (at protein level).

It localises to the mitochondrion inner membrane. Its function is as follows. Mitochondrial intermembrane chaperone that participates in the import and insertion of some multi-pass transmembrane proteins into the mitochondrial inner membrane. Also required for the transfer of beta-barrel precursors from the TOM complex to the sorting and assembly machinery (SAM complex) of the outer membrane. Acts as a chaperone-like protein that protects the hydrophobic precursors from aggregation and guide them through the mitochondrial intermembrane space. The TIMM8-TIMM13 complex mediates the import of proteins such as TIMM23, SLC25A12/ARALAR1 and SLC25A13/ARALAR2, while the predominant TIMM9-TIMM10 70 kDa complex mediates the import of much more proteins. This chain is Mitochondrial import inner membrane translocase subunit Tim13 (Timm13), found in Mus musculus (Mouse).